The sequence spans 374 residues: DNA integrity scanning protein DisA (374 aa).

Residues Glu20–Ser158 enclose the DAC domain. Residues Gly87, Leu105, and Thr118–Thr122 contribute to the ATP site.

It belongs to the DisA family. Homooctamer. Requires Mg(2+) as cofactor.

The catalysed reaction is 2 ATP = 3',3'-c-di-AMP + 2 diphosphate. Functionally, participates in a DNA-damage check-point that is active prior to asymmetric division when DNA is damaged. DisA forms globular foci that rapidly scan along the chromosomes during sporulation, searching for lesions. When a lesion is present, DisA pauses at the lesion site. This triggers a cellular response that culminates in a temporary block in sporulation initiation. Also has diadenylate cyclase activity, catalyzing the condensation of 2 ATP molecules into cyclic di-AMP (c-di-AMP). c-di-AMP acts as a signaling molecule that couples DNA integrity with progression of sporulation. The rise in c-di-AMP level generated by DisA while scanning the chromosome, operates as a positive signal that advances sporulation; upon encountering a lesion, the DisA focus arrests at the damaged site and halts c-di-AMP synthesis. In Streptomyces griseus subsp. griseus (strain JCM 4626 / CBS 651.72 / NBRC 13350 / KCC S-0626 / ISP 5235), this protein is DNA integrity scanning protein DisA.